Here is a 382-residue protein sequence, read N- to C-terminus: D-galactonate dehydratase (382 aa).

Aspartate 183 contributes to the Mg(2+) binding site. Catalysis depends on histidine 185, which acts as the Proton donor. 2 residues coordinate Mg(2+): glutamate 209 and glutamate 235. Residue histidine 285 is the Proton acceptor of the active site.

It belongs to the mandelate racemase/muconate lactonizing enzyme family. GalD subfamily. Mg(2+) serves as cofactor.

The enzyme catalyses D-galactonate = 2-dehydro-3-deoxy-D-galactonate + H2O. It participates in carbohydrate acid metabolism; D-galactonate degradation; D-glyceraldehyde 3-phosphate and pyruvate from D-galactonate: step 1/3. Catalyzes the dehydration of D-galactonate to 2-keto-3-deoxy-D-galactonate. This chain is D-galactonate dehydratase, found in Pectobacterium atrosepticum (strain SCRI 1043 / ATCC BAA-672) (Erwinia carotovora subsp. atroseptica).